Consider the following 254-residue polypeptide: Isoprenyl transferase (254 aa).

Aspartate 12 is an active-site residue. Aspartate 12 contacts Mg(2+). Residues 13 to 16, tryptophan 17, arginine 25, histidine 29, and 57 to 59 contribute to the substrate site; these read GNGR and SSE. The Proton acceptor role is filled by asparagine 60. Residues tryptophan 61, arginine 63, arginine 180, and 186–188 each bind substrate; that span reads RLS. Residue glutamate 199 coordinates Mg(2+).

Belongs to the UPP synthase family. As to quaternary structure, homodimer. It depends on Mg(2+) as a cofactor.

Its function is as follows. Catalyzes the condensation of isopentenyl diphosphate (IPP) with allylic pyrophosphates generating different type of terpenoids. The protein is Isoprenyl transferase of Brucella suis biovar 1 (strain 1330).